The chain runs to 225 residues: Glycerol-3-phosphate acyltransferase (225 aa).

A run of 6 helical transmembrane segments spans residues 6 to 26 (FFFFFLLFYALGSFPTGLIIG), 55 to 75 (WGIVVFLFDFAKGLVPAIICL), 95 to 115 (DIAICLLVILPIFGHMFSIFN), 135 to 155 (PFIGLLGILFFVLLFIFVGYA), 160 to 180 (IMATLLVDLLLFFINHHPGIT), and 187 to 207 (ILYFFIGLSTCFIILKHHSNI).

This sequence belongs to the PlsY family. As to quaternary structure, probably interacts with PlsX.

The protein localises to the cell membrane. It catalyses the reaction an acyl phosphate + sn-glycerol 3-phosphate = a 1-acyl-sn-glycero-3-phosphate + phosphate. The protein operates within lipid metabolism; phospholipid metabolism. In terms of biological role, catalyzes the transfer of an acyl group from acyl-phosphate (acyl-PO(4)) to glycerol-3-phosphate (G3P) to form lysophosphatidic acid (LPA). This enzyme utilizes acyl-phosphate as fatty acyl donor, but not acyl-CoA or acyl-ACP. The chain is Glycerol-3-phosphate acyltransferase from Phytoplasma australiense.